Here is a 593-residue protein sequence, read N- to C-terminus: MTVLQQPADLDDACLRARAVAAARGDARFDVLVAGGTVVDVVTGECRAADVGIVGALIASVHAPGSRSDADTVIDAAGAYISPGLIDTHMHVESSMVTPAVYAAAVVPRGVTTVVWDPHEFGNVSGLAGVRWAVDAMGGLPLRAVVLAPSCVPSAPGLEVAGADFDADAVAEMLSWPEIGGIAEVMNMRGVIDGDPRMTAIVEAGLKAGKPVNGHARGLEGADLQAFVTAGVSSDHELVSGDDLIAKLRAGLSIELRGSHDHLLPEFVIALGTLGHLPQTVTLCTDDVFPDDLHRDGGLDDVVRRLVRYGLKAEWALQAATLNAARRLGRADLGLIAPGRRADIVLFEDIRDFRALHVLANGRLVASGGGMLQAPVAAGVSPLRHTMKIEPLTEDDFRIAATGSTARVVTIDRPRFTRWGETRAEVSGGYLVPPKGMTLIAVAHRHGRADSRPRVGLLEGWGEWRGAFATTVSHDSHNLTVFGSSPRDMRVAANAVIEAGGGMAVVAEGKVEALLPLPLCGLVSDAPLAEVAAGFAAIREAAGRIVEWQPPYLVFKACFGATLACNAGPHQTDRGIADVATGKLLESPVLETF.

The protein belongs to the metallo-dependent hydrolases superfamily. Adenine deaminase family. The cofactor is Mn(2+).

The catalysed reaction is adenine + H2O + H(+) = hypoxanthine + NH4(+). This is Adenine deaminase 2 from Rhizobium meliloti (strain 1021) (Ensifer meliloti).